The sequence spans 158 residues: MATRPKVRRPDRALYVPPKVDRIKRVIFACGHRKRCEIGYRPLGDSGNCGPCGARRDVFAPDLYGSGPLPPCPVCGRAVVGPTVREACGHVTCNACETEACAVDRLCIGGGRRLVAICDPYPPYPGPRWRGPRPTRPEAHEAVQRSRGSSEDACTCAP.

The RING-type; degenerate zinc-finger motif lies at Cys72–Gly111. The interval Gly126–Pro158 is disordered. Basic and acidic residues predominate over residues Thr135–Ser150.

This Ictalurid herpesvirus 1 (strain Auburn) (IcHV-1) protein is Putative zinc-binding protein ORF9 (ORF9).